The chain runs to 65 residues: Protein translocase subunit SecE (65 aa).

Residues 44–64 (LVMAVVGLIAYIVQLTTSLII) traverse the membrane as a helical segment.

This sequence belongs to the SecE/SEC61-gamma family. Component of the Sec protein translocase complex. Heterotrimer consisting of SecY (alpha), SecG (beta) and SecE (gamma) subunits. The heterotrimers can form oligomers, although 1 heterotrimer is thought to be able to translocate proteins. Interacts with the ribosome. May interact with SecDF, and other proteins may be involved.

It localises to the cell membrane. In terms of biological role, essential subunit of the Sec protein translocation channel SecYEG. Clamps together the 2 halves of SecY. May contact the channel plug during translocation. In Sulfolobus acidocaldarius (strain ATCC 33909 / DSM 639 / JCM 8929 / NBRC 15157 / NCIMB 11770), this protein is Protein translocase subunit SecE.